The chain runs to 178 residues: ATP-dependent protease subunit HslV (178 aa).

T7 is an active-site residue. 3 residues coordinate Na(+): G162, C165, and T168.

This sequence belongs to the peptidase T1B family. HslV subfamily. A double ring-shaped homohexamer of HslV is capped on each side by a ring-shaped HslU homohexamer. The assembly of the HslU/HslV complex is dependent on binding of ATP.

It localises to the cytoplasm. It catalyses the reaction ATP-dependent cleavage of peptide bonds with broad specificity.. With respect to regulation, allosterically activated by HslU binding. Protease subunit of a proteasome-like degradation complex believed to be a general protein degrading machinery. In Cupriavidus pinatubonensis (strain JMP 134 / LMG 1197) (Cupriavidus necator (strain JMP 134)), this protein is ATP-dependent protease subunit HslV.